The primary structure comprises 478 residues: Stromelysin-1 (478 aa).

The signal sequence occupies residues 1–17 (MKTLPTLLLLCVALCSA). A propeptide spans 18 to 100 (YPLDGASRDA…PRCGVPDVGH (83 aa)) (activation peptide). The Cysteine switch motif lies at 91–98 (PRCGVPDV). Residue C93 participates in Zn(2+) binding. D125 and D159 together coordinate Ca(2+). Positions 169 and 171 each coordinate Zn(2+). Residues D176, G177, G179, and V181 each contribute to the Ca(2+) site. H184 provides a ligand contact to Zn(2+). Residues G191, N193, and D195 each contribute to the Ca(2+) site. A Zn(2+)-binding site is contributed by H197. Residues D199, D200, and E202 each contribute to the Ca(2+) site. Residue H219 participates in Zn(2+) binding. The active site involves E220. Residues H223 and H229 each coordinate Zn(2+). Hemopexin repeat units follow at residues 288–337 (PVMC…WPSL), 338–384 (PSAV…GFPS), 386–434 (IRKI…FPGI), and 435–478 (NPKI…WFQC). Residues C291 and C478 are joined by a disulfide bond. D298 contributes to the Ca(2+) binding site. 2 residues coordinate Ca(2+): D390 and D439.

This sequence belongs to the peptidase M10A family. It depends on Ca(2+) as a cofactor. Zn(2+) is required as a cofactor.

It localises to the secreted. Its subcellular location is the extracellular space. The protein localises to the extracellular matrix. The catalysed reaction is Preferential cleavage where P1', P2' and P3' are hydrophobic residues.. In terms of biological role, metalloproteinase with a rather broad substrate specificity that can degrade fibronectin, laminin, gelatins of type I, III, IV, and V; collagens III, IV, X, and IX, and cartilage proteoglycans. Activates different molecules including growth factors, plasminogen or other matrix metalloproteinases such as MMP9. Once released into the extracellular matrix (ECM), the inactive pro-enzyme is activated by the plasmin cascade signaling pathway. Also acts intracellularly. For example, in dopaminergic neurons, gets activated by the serine protease HTRA2 upon stress and plays a pivotal role in DA neuronal degeneration by mediating microglial activation and alpha-synuclein/SNCA cleavage. In addition, plays a role in immune response and possesses antiviral activity against various viruses. Mechanistically, translocates from the cytoplasm into the cell nucleus upon virus infection to influence NF-kappa-B activities. This Oryctolagus cuniculus (Rabbit) protein is Stromelysin-1 (MMP3).